The chain runs to 248 residues: Protein FAM133A (248 aa).

Over residues 68–80 (NWKKELEKSREKL) the composition is skewed to basic and acidic residues. The tract at residues 68–248 (NWKKELEKSR…KKSGSSHKSR (181 aa)) is disordered. The segment covering 90-102 (KRERKKKRKKKSC) has biased composition (basic residues). The span at 103–118 (RSSSSSSSSDSSSSSS) shows a compositional bias: low complexity. Basic residues predominate over residues 127–138 (QGKRRKKKKNRS). Composition is skewed to basic and acidic residues over residues 147–156 (HESESESKES), 163–175 (SKDE…DVRS), and 211–220 (RCEEREQAKE). Basic residues predominate over residues 221-248 (KVKKKKKKQHKKHSKKKKKKSGSSHKSR).

It belongs to the FAM133 family.

The protein is Protein FAM133A (FAM133A) of Homo sapiens (Human).